The chain runs to 329 residues: Putative oligopeptide transport ATP-binding protein YkfD (329 aa).

Positions 7 to 252 (LEVSQLKMHF…PLHPYTKALL (246 aa)) constitute an ABC transporter domain. 44–51 (GESGCGKS) contributes to the ATP binding site.

The protein belongs to the ABC transporter superfamily.

This chain is Putative oligopeptide transport ATP-binding protein YkfD (ykfD), found in Bacillus subtilis (strain 168).